We begin with the raw amino-acid sequence, 1490 residues long: WD repeat-containing protein 7 (1490 aa).

WD repeat units lie at residues 17–56, 62–104, 156–199, 324–366, 404–443, 462–507, and 558–597; these read APTH…QINP, GHTA…CIEF, ISPD…SDMQ, LICP…DKQG, NEPL…IVQL, GHRN…MKHI, and RHLF…LDRC. Disordered stretches follow at residues 761–783 and 911–945; these read DEEE…YRSS and GDHM…IVQG. A compositionally biased stretch (basic and acidic residues) spans 768-782; the sequence is IMRQRREESDPEYRS. Serine 935 carries the phosphoserine modification. Residues 936-945 show a composition bias toward polar residues; the sequence is PPTSSNIVQG. WD repeat units follow at residues 1351–1390 and 1392–1432; these read PAIC…CQTI and GHKG…LGSI. Phosphoserine is present on serine 1456.

The protein is WD repeat-containing protein 7 (WDR7) of Homo sapiens (Human).